The following is a 339-amino-acid chain: tRNA N6-adenosine threonylcarbamoyltransferase (339 aa).

Fe cation is bound by residues histidine 111 and histidine 115. Residues 134-138 (LVSGG), aspartate 167, glycine 180, and asparagine 274 each bind substrate. Residue aspartate 302 coordinates Fe cation.

The protein belongs to the KAE1 / TsaD family. Requires Fe(2+) as cofactor.

It localises to the cytoplasm. The enzyme catalyses L-threonylcarbamoyladenylate + adenosine(37) in tRNA = N(6)-L-threonylcarbamoyladenosine(37) in tRNA + AMP + H(+). Its function is as follows. Required for the formation of a threonylcarbamoyl group on adenosine at position 37 (t(6)A37) in tRNAs that read codons beginning with adenine. Is involved in the transfer of the threonylcarbamoyl moiety of threonylcarbamoyl-AMP (TC-AMP) to the N6 group of A37, together with TsaE and TsaB. TsaD likely plays a direct catalytic role in this reaction. This chain is tRNA N6-adenosine threonylcarbamoyltransferase, found in Methylobacillus flagellatus (strain ATCC 51484 / DSM 6875 / VKM B-1610 / KT).